Consider the following 249-residue polypeptide: Transcriptional activator protein EsaR (249 aa).

The region spanning 174-239 (QSADKTIFSS…QAIRLGVELD (66 aa)) is the HTH luxR-type domain. The H-T-H motif DNA-binding region spans 198–217 (YAEIAAITGISVSTVKFHIK).

The protein belongs to the autoinducer-regulated transcriptional regulatory protein family.

Functions as a potential OhlL-responsive transcriptional regulator. This is Transcriptional activator protein EsaR (esaR) from Pantoea stewartii subsp. stewartii (Erwinia stewartii).